The chain runs to 379 residues: Cobalt-precorrin-5B C(1)-methyltransferase (379 aa).

It belongs to the CbiD family.

It carries out the reaction Co-precorrin-5B + S-adenosyl-L-methionine = Co-precorrin-6A + S-adenosyl-L-homocysteine. It functions in the pathway cofactor biosynthesis; adenosylcobalamin biosynthesis; cob(II)yrinate a,c-diamide from sirohydrochlorin (anaerobic route): step 6/10. In terms of biological role, catalyzes the methylation of C-1 in cobalt-precorrin-5B to form cobalt-precorrin-6A. In Cyanothece sp. (strain PCC 7425 / ATCC 29141), this protein is Cobalt-precorrin-5B C(1)-methyltransferase.